Reading from the N-terminus, the 143-residue chain is Nucleoside diphosphate kinase (143 aa).

6 residues coordinate ATP: Lys-11, Phe-59, Arg-87, Thr-93, Arg-104, and Asn-114. Residue His-117 is the Pros-phosphohistidine intermediate of the active site.

It belongs to the NDK family. Homotetramer. The cofactor is Mg(2+).

The protein resides in the cytoplasm. The catalysed reaction is a 2'-deoxyribonucleoside 5'-diphosphate + ATP = a 2'-deoxyribonucleoside 5'-triphosphate + ADP. It catalyses the reaction a ribonucleoside 5'-diphosphate + ATP = a ribonucleoside 5'-triphosphate + ADP. Major role in the synthesis of nucleoside triphosphates other than ATP. The ATP gamma phosphate is transferred to the NDP beta phosphate via a ping-pong mechanism, using a phosphorylated active-site intermediate. This Acinetobacter baylyi (strain ATCC 33305 / BD413 / ADP1) protein is Nucleoside diphosphate kinase.